The primary structure comprises 516 residues: rRNA N(6)-adenosine-methyltransferase ZCCHC4 (516 aa).

Cys40, His42, Cys66, Cys75, Cys127, Cys130, His142, and His145 together coordinate Zn(2+). The GRF-type zinc-finger motif lies at 40–84; the sequence is CPHELGPTLLFVKVNQGKEETRRFYACSACRDRKDCNFFQWEDEK. Residues 174 to 177, Arg204, Asp227, 245 to 246, and Asp278 each bind S-adenosyl-L-methionine; these read QYLF and NM. The tract at residues 339-360 is regulatory loop; the sequence is QVVDYDNHALYKHGKTGRKQSP. Zn(2+) contacts are provided by Cys383, Cys386, His396, Cys397, Cys400, Cys403, His413, Cys414, Cys417, Cys420, His427, Cys428, Cys431, Cys434, His439, and Cys441. In terms of domain architecture, DHHC spans 398-448; sequence EHCNSCTSKDGRKWNHCFLCKKCVKPSWIHCSICNHCALPDHSCKGPKDGC. The CCHC-type zinc-finger motif lies at 446-463; the sequence is DGCFICGELDHKRSACPN. The span at 472 to 484 shows a compositional bias: basic residues; sequence KAVRKQKQRKSNK. A disordered region spans residues 472 to 516; sequence KAVRKQKQRKSNKMKMETTKGQSMNHTSATRKKKRRERTHQYLCS. Residues 490 to 499 show a composition bias toward polar residues; sequence TKGQSMNHTS. Positions 500-509 are enriched in basic residues; sequence ATRKKKRRER.

It belongs to the ZCCHC4 family. Interacts with components of the ASC-1 complex TRIP4, ASCC1, ASCC2 and ASCC3. Interact with AHCYL1 and AHCYL2. Interact with YTHDC2.

The protein resides in the cytoplasm. Its subcellular location is the nucleus. The protein localises to the nucleolus. It carries out the reaction adenosine(4220) in 28S rRNA + S-adenosyl-L-methionine = N(6)-methyladenosine(4220) in 28S rRNA + S-adenosyl-L-homocysteine + H(+). RRNA N6-methyltransferase that specifically methylates the adenine in position 4220 of 28S rRNA. N6-methylation of adenine(4220) in 28S rRNA is required for translation. The protein is rRNA N(6)-adenosine-methyltransferase ZCCHC4 of Bos taurus (Bovine).